Here is a 266-residue protein sequence, read N- to C-terminus: 4-hydroxy-tetrahydrodipicolinate reductase (266 aa).

10 to 15 (GPRGRM) contributes to the NAD(+) binding site. Residue lysine 38 coordinates NADP(+). NAD(+)-binding positions include 99–101 (GTT) and 125–128 (APNF). Histidine 155 functions as the Proton donor/acceptor in the catalytic mechanism. (S)-2,3,4,5-tetrahydrodipicolinate is bound at residue histidine 156. The active-site Proton donor is the lysine 159. 165 to 166 (GT) lines the (S)-2,3,4,5-tetrahydrodipicolinate pocket.

It belongs to the DapB family.

The protein localises to the cytoplasm. The enzyme catalyses (S)-2,3,4,5-tetrahydrodipicolinate + NAD(+) + H2O = (2S,4S)-4-hydroxy-2,3,4,5-tetrahydrodipicolinate + NADH + H(+). The catalysed reaction is (S)-2,3,4,5-tetrahydrodipicolinate + NADP(+) + H2O = (2S,4S)-4-hydroxy-2,3,4,5-tetrahydrodipicolinate + NADPH + H(+). The protein operates within amino-acid biosynthesis; L-lysine biosynthesis via DAP pathway; (S)-tetrahydrodipicolinate from L-aspartate: step 4/4. Functionally, catalyzes the conversion of 4-hydroxy-tetrahydrodipicolinate (HTPA) to tetrahydrodipicolinate. This is 4-hydroxy-tetrahydrodipicolinate reductase from Bacillus cereus (strain ZK / E33L).